The sequence spans 179 residues: Large ribosomal subunit protein uL5 (179 aa).

It belongs to the universal ribosomal protein uL5 family. As to quaternary structure, part of the 50S ribosomal subunit; part of the 5S rRNA/L5/L18/L25 subcomplex. Contacts the 5S rRNA and the P site tRNA. Forms a bridge to the 30S subunit in the 70S ribosome.

Functionally, this is one of the proteins that bind and probably mediate the attachment of the 5S RNA into the large ribosomal subunit, where it forms part of the central protuberance. In the 70S ribosome it contacts protein S13 of the 30S subunit (bridge B1b), connecting the 2 subunits; this bridge is implicated in subunit movement. Contacts the P site tRNA; the 5S rRNA and some of its associated proteins might help stabilize positioning of ribosome-bound tRNAs. The polypeptide is Large ribosomal subunit protein uL5 (Paraburkholderia phymatum (strain DSM 17167 / CIP 108236 / LMG 21445 / STM815) (Burkholderia phymatum)).